Reading from the N-terminus, the 128-residue chain is MRHYEIVLLVHPDQSDQVVGMVERYISQIKEADGQIHRLEDWGRRQLAYPINKIHKAHYILMNVECGQTTLDELEELFRYNDAIIRNIIIRREHAITEESLLAKSAEEKRARKAQREEAQQIQDSAEA.

The protein belongs to the bacterial ribosomal protein bS6 family.

Its function is as follows. Binds together with bS18 to 16S ribosomal RNA. This Acinetobacter baylyi (strain ATCC 33305 / BD413 / ADP1) protein is Small ribosomal subunit protein bS6.